The following is a 452-amino-acid chain: tRNA modification GTPase MnmE (452 aa).

(6S)-5-formyl-5,6,7,8-tetrahydrofolate contacts are provided by Arg23, Glu80, and Lys119. A TrmE-type G domain is found at 215-374 (GIWIALVGQP…LQQGLLEMIG (160 aa)). Asn225 contacts K(+). Residues 225-230 (NVGKSS), 244-250 (TEVPGTT), and 269-272 (DTAG) each bind GTP. Residue Ser229 coordinates Mg(2+). Residues Thr244, Val246, and Thr249 each contribute to the K(+) site. Thr250 serves as a coordination point for Mg(2+). Residue Lys452 participates in (6S)-5-formyl-5,6,7,8-tetrahydrofolate binding.

This sequence belongs to the TRAFAC class TrmE-Era-EngA-EngB-Septin-like GTPase superfamily. TrmE GTPase family. In terms of assembly, homodimer. Heterotetramer of two MnmE and two MnmG subunits. The cofactor is K(+).

Its subcellular location is the cytoplasm. Functionally, exhibits a very high intrinsic GTPase hydrolysis rate. Involved in the addition of a carboxymethylaminomethyl (cmnm) group at the wobble position (U34) of certain tRNAs, forming tRNA-cmnm(5)s(2)U34. The sequence is that of tRNA modification GTPase MnmE from Nitrosospira multiformis (strain ATCC 25196 / NCIMB 11849 / C 71).